Here is a 594-residue protein sequence, read N- to C-terminus: Invasin CotH2 (594 aa).

The N-terminal stretch at 1 to 19 is a signal peptide; the sequence is MKLSLTIVSSSFLVAIAHA. 7 N-linked (GlcNAc...) asparagine glycosylation sites follow: Asn77, Asn162, Asn226, Asn316, Asn441, Asn519, and Asn533. The segment at 529–565 is disordered; sequence PPAANGTATSTNDGGNTHTAAGESKPASSSESSGSKI. Residues 534–547 show a composition bias toward polar residues; it reads GTATSTNDGGNTHT. Positions 548 to 565 are enriched in low complexity; the sequence is AAGESKPASSSESSGSKI. Ser571 is lipidated: GPI-anchor amidated serine. A propeptide spans 572-594 (removed in mature form); that stretch reads GASRSAVSTVLLGVTALVATAIF.

In terms of assembly, interacts with host epithelial cell surface HSPA5/BiP protein.

The protein localises to the cell membrane. Its function is as follows. Promotes invasion of host epithelial cells by adhering to receptors on the host cell surface to facilitate endocytosis of the pathogen into host cells. Binds HSPA5/BiP protein on the cell surface of host epithelial cells. The sequence is that of Invasin CotH2 from Rhizopus delemar (strain RA 99-880 / ATCC MYA-4621 / FGSC 9543 / NRRL 43880) (Mucormycosis agent).